Consider the following 349-residue polypeptide: N-acetyltaurine hydrolase (349 aa).

A divalent metal cation is bound by residues His26, His28, Glu169, His201, His230, and Asp298.

Belongs to the metallo-dependent hydrolases superfamily. Phosphotriesterase family. Requires a divalent metal cation as cofactor.

The protein resides in the cytoplasm. The protein localises to the cytosol. It catalyses the reaction N-acetyltaurine + H2O = taurine + acetate. It carries out the reaction N-propanoyltaurine + H2O = propanoate + taurine. The catalysed reaction is N-acetyl-L-methionine + H2O = L-methionine + acetate. The enzyme catalyses N-acetyl-L-isoleucine + H2O = L-isoleucine + acetate. It catalyses the reaction N-acetyl-L-leucine + H2O = L-leucine + acetate. It carries out the reaction N-acetyl-L-valine + H2O = L-valine + acetate. Functionally, N-acetyltaurine hydrolase that catalyzes the hydrolysis of N-acetyltaurine into taurine and acetate. PTER also acts on other N-acetyl amino acids (Met, Ile, Leu, Val) and N-propionyltaurine, but at lower rates. This chain is N-acetyltaurine hydrolase (pter), found in Tetraodon nigroviridis (Spotted green pufferfish).